The sequence spans 395 residues: Nitrite extrusion protein (395 aa).

12 helical membrane passes run 15-35, 44-64, 73-93, 96-116, 133-153, 160-180, 203-223, 240-262, 271-291, 293-313, 330-350, and 357-377; these read SLVA…QITL, ISLV…PLGY, LMFM…SIAD, FDLI…SIGV, GIYG…PVIA, STVQ…VLFG, VLWF…AFTI, AGLR…GFLA, LMFV…SPTI, LYTF…GTVF, IVSA…ASVF, and AIGF…VIWM.

The protein belongs to the major facilitator superfamily. Nitrate/nitrite porter (TC 2.A.1.8) family.

It is found in the cell membrane. In terms of biological role, involved in excretion of nitrite produced by the dissimilatory reduction of nitrate. This Bacillus subtilis (strain 168) protein is Nitrite extrusion protein (narK).